We begin with the raw amino-acid sequence, 879 residues long: MPQKYSTLKNNINMLGHFLGETISDAQGSDILDLIENIRVLSRDSRSGDEKAREKLLDTLSTISNENIIPVARAFSQFLNLTNIAEQYQTISRKHIDQVASDRSLEALFERLKAQNVPAEKVISTVEKLLIELVLTAHPTEVTRRSLLHKYVEINRCLSRLEHDDLTQSESTKLKRRLMQLIALAWHTNEIRTQRPTPVDEAKWGIAVIENSLWKAVPDFCRQLNLHLEKNFGVQHSVNLAPVKFSSWIGGDRDGNPFVTAETTRQVLIMNRWKAAELFLADIQVLSEELSVVHCTEEFRAKYGDHLEPYRVVVKNLRAKLVKTVAYYGEILENKPSTINTNDILTDDQQLWEPLYDCYQSLHQCGMRIIANGILLDCLRRIRCFGLSLSHLDIRQESLRHTKALSEITRYIGLGDYSQWMEDDKQAFLIRELSSRRPLLPRNWTPSPETQEILETCRVIAQQPEGVISCYIISMARTASDVLAVHLLLKEAGVTYYLPVVPLFETLDDLNASKEVMTQLFNVGWYRGVINNKQMVMIGYSDSAKDAGMMAASWAQYRAQEQLVNLCEKMGVELTLFHGRGGTIGRGGAPAHAALLSQPPRSLKNGLRVTEQGEMIRFKLGLPAVAVNSFDLYASAILEANLLPPPEPKESWRAIMNELSDSSCNIYRSVVRGDKDFVPYFRSATPEQELSKLPLGSRPSKRNPNGGVESLRAIPWIFAWMQNRLMLPAWLGASASIRQSIEKGNKETIEEMCKNWPFFSTRIGMLEMVFSKTDTWLSEHYDLNLVKKELWYLGQSLREQLQADIKTILSLSHEDELMSDLPWIAESIALRNIYTDPLNLLQVELLRRLRENPENPNPDVEQALMITITGIAAGMRNTG.

Catalysis depends on residues histidine 138 and lysine 545.

The protein belongs to the PEPCase type 1 family. Mg(2+) is required as a cofactor.

It catalyses the reaction oxaloacetate + phosphate = phosphoenolpyruvate + hydrogencarbonate. Forms oxaloacetate, a four-carbon dicarboxylic acid source for the tricarboxylic acid cycle. This Histophilus somni (strain 2336) (Haemophilus somnus) protein is Phosphoenolpyruvate carboxylase.